The chain runs to 364 residues: UDP-N-acetylglucosamine--N-acetylmuramyl-(pentapeptide) pyrophosphoryl-undecaprenol N-acetylglucosamine transferase 1 (364 aa).

UDP-N-acetyl-alpha-D-glucosamine-binding positions include 10-12, Asn124, Ser195, Ile250, and Gln295; that span reads TGG.

It belongs to the glycosyltransferase 28 family. MurG subfamily.

Its subcellular location is the cell membrane. It catalyses the reaction di-trans,octa-cis-undecaprenyl diphospho-N-acetyl-alpha-D-muramoyl-L-alanyl-D-glutamyl-meso-2,6-diaminopimeloyl-D-alanyl-D-alanine + UDP-N-acetyl-alpha-D-glucosamine = di-trans,octa-cis-undecaprenyl diphospho-[N-acetyl-alpha-D-glucosaminyl-(1-&gt;4)]-N-acetyl-alpha-D-muramoyl-L-alanyl-D-glutamyl-meso-2,6-diaminopimeloyl-D-alanyl-D-alanine + UDP + H(+). It participates in cell wall biogenesis; peptidoglycan biosynthesis. Functionally, cell wall formation. Catalyzes the transfer of a GlcNAc subunit on undecaprenyl-pyrophosphoryl-MurNAc-pentapeptide (lipid intermediate I) to form undecaprenyl-pyrophosphoryl-MurNAc-(pentapeptide)GlcNAc (lipid intermediate II). The polypeptide is UDP-N-acetylglucosamine--N-acetylmuramyl-(pentapeptide) pyrophosphoryl-undecaprenol N-acetylglucosamine transferase 1 (Bacillus anthracis).